The sequence spans 109 residues: Spermidine export protein MdtI (109 aa).

The Periplasmic segment spans residues 1-5; the sequence is MAQFE. Residues 6–26 form a helical membrane-spanning segment; that stretch reads WVHAAWLALAIVLEIVANVFL. Residues 27–35 lie on the Cytoplasmic side of the membrane; sequence KFSDGFRRK. The chain crosses the membrane as a helical span at residues 36 to 56; sequence IFGLLSLAAVLAAFSALSQAV. The Periplasmic portion of the chain corresponds to 57–63; sequence KGIDLSV. Residues 64–84 form a helical membrane-spanning segment; the sequence is VYALWGGFGIAATLAAGWILF. The Cytoplasmic segment spans residues 85–87; that stretch reads GQR. The helical transmembrane segment at 88 to 108 threads the bilayer; sequence LNRKGWIGLVLLLAGMIMVKL. Residue Ala109 is a topological domain, periplasmic.

This sequence belongs to the drug/metabolite transporter (DMT) superfamily. Small multidrug resistance (SMR) (TC 2.A.7.1) family. MdtI subfamily. Forms a complex with MdtJ.

The protein resides in the cell inner membrane. Functionally, catalyzes the excretion of spermidine. This chain is Spermidine export protein MdtI (mdtI), found in Shigella flexneri.